Reading from the N-terminus, the 271-residue chain is Eukaryotic translation initiation factor 2 subunit beta (271 aa).

The C4-type zinc finger occupies 223–247 (CLGCQSPDTILSKENRLFFLRCEKC).

This sequence belongs to the eIF-2-beta/eIF-5 family. As to quaternary structure, eukaryotic translation initiation factor 2 eIF2 is a heterotrimeric complex composed of an alpha, a beta and a gamma subunit.

The protein localises to the cytoplasm. The protein resides in the cytosol. In terms of biological role, component of the eIF2 complex that functions in the early steps of protein synthesis by forming a ternary complex with GTP and initiator tRNA. This complex binds to a 40S ribosomal subunit, followed by mRNA binding to form a 43S pre-initiation complex (43S PIC). Junction of the 60S ribosomal subunit to form the 80S initiation complex is preceded by hydrolysis of the GTP bound to eIF2 and release of an eIF2-GDP binary complex. In order for eIF2 to recycle and catalyze another round of initiation, the GDP bound to eIF2 must exchange with GTP by way of a reaction catalyzed by eIF2B. This chain is Eukaryotic translation initiation factor 2 subunit beta, found in Malus domestica (Apple).